Reading from the N-terminus, the 677-residue chain is Amine oxidase [copper-containing] alpha 2, peroxisomal (677 aa).

Substrate is bound at residue 320-331 (YLDCGEFGCGQT). Asp322 functions as the Proton acceptor in the catalytic mechanism. Cys341 and Cys367 are joined by a disulfide. 407-412 (VGNYDY) is a substrate binding site. The Schiff-base intermediate with substrate; via topaquinone role is filled by Tyr410. Tyr410 carries the 2',4',5'-topaquinone modification. Cu cation is bound by residues His466 and His468. Mn(2+)-binding residues include Asp477, Asp617, and Ile618. Residue His628 participates in Cu cation binding.

Belongs to the copper/topaquinone oxidase family. As to quaternary structure, homodimer. Requires Cu cation as cofactor. The cofactor is Zn(2+). It depends on L-topaquinone as a cofactor. In terms of processing, topaquinone (TPQ) is generated by copper-dependent autoxidation of a specific tyrosyl residue. In terms of tissue distribution, expressed exclusively in leaves.

It localises to the peroxisome. The catalysed reaction is a primary methyl amine + O2 + H2O = an aldehyde + H2O2 + NH4(+). Its pathway is amine and polyamine degradation; putrescine degradation. Functionally, copper amine oxidase that can use putrescine and spermidine as substrates. Involved in putrescine catabolism in peroxisomes in response to salt stress. Regulates arginine-dependent nitric oxide (NO) production, a key signaling molecule regulating a wide range of physiological processes including responses to salt stress, by influencing arginine bioavailability. Modulates primary root growth. This is Amine oxidase [copper-containing] alpha 2, peroxisomal from Arabidopsis thaliana (Mouse-ear cress).